An 873-amino-acid chain; its full sequence is Bifunctional uridylyltransferase/uridylyl-removing enzyme (873 aa).

The segment at 1 to 332 (MAFQSPLTFN…NGGETEPAVI (332 aa)) is uridylyltransferase. Positions 333 to 692 (INEDFQRRGR…MSKKATRGGT (360 aa)) are uridylyl-removing. Residues 451–573 (VDEHSVRLLN…VRDEERLEYL (123 aa)) enclose the HD domain. ACT domains are found at residues 693-773 (EVFV…VKTR) and 800-873 (LMEL…ELAP).

It belongs to the GlnD family. It depends on Mg(2+) as a cofactor.

It catalyses the reaction [protein-PII]-L-tyrosine + UTP = [protein-PII]-uridylyl-L-tyrosine + diphosphate. It carries out the reaction [protein-PII]-uridylyl-L-tyrosine + H2O = [protein-PII]-L-tyrosine + UMP + H(+). Its activity is regulated as follows. Uridylyltransferase (UTase) activity is inhibited by glutamine, while glutamine activates uridylyl-removing (UR) activity. Modifies, by uridylylation and deuridylylation, the PII regulatory proteins (GlnB and homologs), in response to the nitrogen status of the cell that GlnD senses through the glutamine level. Under low glutamine levels, catalyzes the conversion of the PII proteins and UTP to PII-UMP and PPi, while under higher glutamine levels, GlnD hydrolyzes PII-UMP to PII and UMP (deuridylylation). Thus, controls uridylylation state and activity of the PII proteins, and plays an important role in the regulation of nitrogen assimilation and metabolism. The sequence is that of Bifunctional uridylyltransferase/uridylyl-removing enzyme from Vibrio vulnificus (strain CMCP6).